We begin with the raw amino-acid sequence, 150 residues long: Actin-related protein 2/3 complex subunit 5-C (150 aa).

A disordered region spans residues 21-45 (NKFVDEEEAGEGQQGPDEGEVDSAI).

Belongs to the ARPC5 family. Component of the Arp2/3 complex composed of actr2/arp2, actr3/arp3, arpc1 (arpc1a or arpc1b), arpc2, arpc3, arpc4 and arpc5.

Its subcellular location is the cytoplasm. It is found in the cytoskeleton. The protein localises to the cell projection. It localises to the nucleus. Functionally, component of the Arp2/3 complex, a multiprotein complex that mediates actin polymerization upon stimulation by nucleation-promoting factor (NPF). The Arp2/3 complex mediates the formation of branched actin networks in the cytoplasm, providing the force for cell motility. In addition to its role in the cytoplasmic cytoskeleton, the Arp2/3 complex also promotes actin polymerization in the nucleus, thereby regulating gene transcription and repair of damaged DNA. The Arp2/3 complex promotes homologous recombination (HR) repair in response to DNA damage by promoting nuclear actin polymerization, leading to drive motility of double-strand breaks (DSBs). The chain is Actin-related protein 2/3 complex subunit 5-C (arpc5-c) from Xenopus laevis (African clawed frog).